The primary structure comprises 158 residues: 6,7-dimethyl-8-ribityllumazine synthase (158 aa).

5-amino-6-(D-ribitylamino)uracil-binding positions include Phe22, 56-58 (ALE), and 80-82 (VVI). 85-86 (ET) is a binding site for (2S)-2-hydroxy-3-oxobutyl phosphate. His88 functions as the Proton donor in the catalytic mechanism. 5-amino-6-(D-ribitylamino)uracil is bound at residue Asn113. Arg127 contacts (2S)-2-hydroxy-3-oxobutyl phosphate.

The protein belongs to the DMRL synthase family.

It carries out the reaction (2S)-2-hydroxy-3-oxobutyl phosphate + 5-amino-6-(D-ribitylamino)uracil = 6,7-dimethyl-8-(1-D-ribityl)lumazine + phosphate + 2 H2O + H(+). The protein operates within cofactor biosynthesis; riboflavin biosynthesis; riboflavin from 2-hydroxy-3-oxobutyl phosphate and 5-amino-6-(D-ribitylamino)uracil: step 1/2. Its function is as follows. Catalyzes the formation of 6,7-dimethyl-8-ribityllumazine by condensation of 5-amino-6-(D-ribitylamino)uracil with 3,4-dihydroxy-2-butanone 4-phosphate. This is the penultimate step in the biosynthesis of riboflavin. The protein is 6,7-dimethyl-8-ribityllumazine synthase of Neisseria gonorrhoeae (strain ATCC 700825 / FA 1090).